The chain runs to 562 residues: Tissue-type plasminogen activator (562 aa).

Positions 1–19 (MYALKRELWCVLLLCGAIC) are cleaved as a signal peptide. A propeptide spanning residues 20 to 32 (TSPSQETHRRLRR) is cleaved from the precursor. A propeptide spans 33–35 (GVR) (removed by plasmin). Residues 39 to 81 (VTCRDEKTQMIYQQHQSWLRPLLRGNRVEHCWCNDGQTQCHSV) form the Fibronectin type-I domain. Disulfide bonds link Cys41–Cys71, Cys69–Cys78, Cys86–Cys97, Cys91–Cys108, Cys110–Cys119, Cys127–Cys208, Cys148–Cys190, Cys179–Cys203, Cys215–Cys296, Cys236–Cys278, Cys267–Cys291, Cys299–Cys430, Cys342–Cys358, Cys350–Cys419, Cys444–Cys519, Cys476–Cys492, and Cys509–Cys537. An important for binding to annexin A2 region spans residues 42–52 (RDEKTQMIYQQ). The EGF-like domain occupies 82–120 (PVKSCSEPRCFNGGTCLQAIYFSDFVCQCPVGFIGRQCE). Residue Thr96 is glycosylated (O-linked (Fuc) threonine). Kringle domains follow at residues 126-208 (TCYE…TPAC) and 214-296 (ECYT…LPQC). Asn152 is a glycosylation site (N-linked (GlcNAc...) asparagine). The Peptidase S1 domain maps to 311-561 (IKGGLYADIT…YLNWIRDNTR (251 aa)). Catalysis depends on charge relay system residues His357 and Asp406. N-linked (GlcNAc...) asparagine glycosylation is present at Asn483. The active-site Charge relay system is the Ser513.

It belongs to the peptidase S1 family. Heterodimer of chain A and chain B held by a disulfide bond. Binds to fibrin with high affinity. This interaction leads to an increase in the catalytic efficiency of the enzyme due to an increase in affinity for plasminogen. Similarly, binding to heparin increases the activation of plasminogen. Binds to annexin A2, cytokeratin-8, fibronectin and laminin. Binds to mannose receptor and the low-density lipoprotein receptor-related protein (LRP1); these proteins are involved in TPA clearance. Binds LRP1B; binding is followed by internalization and degradation. Forms heterodimer with SERPINA5. Interacts with SERPINE1. In complex with SERPINE1, interacts with SORL1. In terms of processing, the single chain, almost fully active enzyme, can be further processed into a two-chain fully active form by a cleavage after Arg-310 catalyzed by plasmin, tissue kallikrein or factor Xa.

The protein resides in the secreted. Its subcellular location is the extracellular space. The catalysed reaction is Specific cleavage of Arg-|-Val bond in plasminogen to form plasmin.. Its activity is regulated as follows. Inhibited by SERPINA5. Inhibited by SERPINE1. Functionally, converts the abundant, but inactive, zymogen plasminogen to plasmin by hydrolyzing a single Arg-Val bond in plasminogen. By controlling plasmin-mediated proteolysis, it plays an important role in tissue remodeling and degradation, in cell migration and many other physiopathological events. During oocyte activation, plays a role in cortical granule reaction in the zona reaction, which contributes to the block to polyspermy. This Sus scrofa (Pig) protein is Tissue-type plasminogen activator (PLAT).